The sequence spans 168 residues: Small ribosomal subunit protein uS9 (168 aa).

Residues 1 to 29 are compositionally biased toward low complexity; sequence MAQNEELTAEAVEAEETLTSYTSESTSAE. The tract at residues 1–36 is disordered; that stretch reads MAQNEELTAEAVEAEETLTSYTSESTSAEDAPKKER.

This sequence belongs to the universal ribosomal protein uS9 family.

This Paenarthrobacter aurescens (strain TC1) protein is Small ribosomal subunit protein uS9.